We begin with the raw amino-acid sequence, 216 residues long: [5-(aminomethyl)furan-3-yl]methyl phosphate kinase (216 aa).

Residues 5–9, Gly-39, Asp-142, 147–152, and Gly-166 each bind ATP; these read KIGGS and YDKFPG.

Belongs to the MfnE family. As to quaternary structure, homotrimer. Mg(2+) serves as cofactor.

It catalyses the reaction [5-(aminomethyl)-3-furyl]methyl phosphate + ATP = [5-(aminomethyl)furan-3-yl]methyl diphosphate + ADP. It functions in the pathway cofactor biosynthesis; methanofuran biosynthesis. Its activity is regulated as follows. Inhibited by EDTA. Catalyzes the formation of 5-(aminomethyl)-3-furanmethanol diphosphate (F1-PP) from 5-(aminomethyl)-3-furanmethanol phosphate (F1-P) and ATP. In vitro, can also act as an adenylate kinase that catalyzes the transfer of a phosphoryl group from ATP to AMP, generating two molecules of ADP. In Methanocaldococcus jannaschii (strain ATCC 43067 / DSM 2661 / JAL-1 / JCM 10045 / NBRC 100440) (Methanococcus jannaschii), this protein is [5-(aminomethyl)furan-3-yl]methyl phosphate kinase.